Consider the following 313-residue polypeptide: Small ribosomal subunit protein uS2 (313 aa).

The span at 228 to 256 shows a compositional bias: basic and acidic residues; sequence RQEDKAAEAQDKDAQDTEDNKGARPRGAE. The interval 228–313 is disordered; the sequence is RQEDKAAEAQ…VSKAGDKPKK (86 aa).

The protein belongs to the universal ribosomal protein uS2 family.

The protein is Small ribosomal subunit protein uS2 of Amoebophilus asiaticus (strain 5a2).